The sequence spans 36 residues: Protein YnfP (36 aa).

In Escherichia coli (strain K12), this protein is Protein YnfP.